A 102-amino-acid polypeptide reads, in one-letter code: Aspartyl/glutamyl-tRNA(Asn/Gln) amidotransferase subunit C (102 aa).

This sequence belongs to the GatC family. In terms of assembly, heterotrimer of A, B and C subunits.

It carries out the reaction L-glutamyl-tRNA(Gln) + L-glutamine + ATP + H2O = L-glutaminyl-tRNA(Gln) + L-glutamate + ADP + phosphate + H(+). The enzyme catalyses L-aspartyl-tRNA(Asn) + L-glutamine + ATP + H2O = L-asparaginyl-tRNA(Asn) + L-glutamate + ADP + phosphate + 2 H(+). Its function is as follows. Allows the formation of correctly charged Asn-tRNA(Asn) or Gln-tRNA(Gln) through the transamidation of misacylated Asp-tRNA(Asn) or Glu-tRNA(Gln) in organisms which lack either or both of asparaginyl-tRNA or glutaminyl-tRNA synthetases. The reaction takes place in the presence of glutamine and ATP through an activated phospho-Asp-tRNA(Asn) or phospho-Glu-tRNA(Gln). The chain is Aspartyl/glutamyl-tRNA(Asn/Gln) amidotransferase subunit C from Mycobacteroides abscessus (strain ATCC 19977 / DSM 44196 / CCUG 20993 / CIP 104536 / JCM 13569 / NCTC 13031 / TMC 1543 / L948) (Mycobacterium abscessus).